The sequence spans 649 residues: Serine/threonine-protein kinase par-4 (649 aa).

The span at 1 to 11 (MEGPSSSSVPT) shows a compositional bias: polar residues. Residues 1–132 (MEGPSSSSVP…DEEAETPEEQ (132 aa)) are disordered. Positions 45-55 (NTEKMEKEKKP) are enriched in basic and acidic residues. Composition is skewed to acidic residues over residues 64 to 77 (PDYD…GSCE) and 117 to 129 (DDME…AETP). The Protein kinase domain maps to 197–460 (YLWGGIIGTG…ISDVMQHPWF (264 aa)). Residues 203–211 (IGTGSYGKV) and Lys226 each bind ATP. The Proton acceptor role is filled by Asp324. A disordered region spans residues 548 to 649 (TLEKRPGDGP…CIFRSRTDSS (102 aa)). Low complexity predominate over residues 597-609 (AVEVVEAVAAPEA).

It belongs to the protein kinase superfamily. CAMK Ser/Thr protein kinase family. LKB1 subfamily. Mg(2+) serves as cofactor. Mn(2+) is required as a cofactor.

The protein resides in the cytoplasm. It is found in the cell cortex. It catalyses the reaction L-seryl-[protein] + ATP = O-phospho-L-seryl-[protein] + ADP + H(+). The catalysed reaction is L-threonyl-[protein] + ATP = O-phospho-L-threonyl-[protein] + ADP + H(+). Its function is as follows. Required for cytoplasmic partitioning and asymmetric cell division in early embryogenesis. Phosphorylates and restricts the asymmetry effectors mex-5 and mex-6 to the anterior cytoplasm of the zygote and maintains these phosphorylations until fertilization. Phosphorylates and regulates aak-2 in response to oxidative stress. May also play a role in motility, behavioral response, regulation of lifespan and dauer formation through this pathway. The protein is Serine/threonine-protein kinase par-4 of Caenorhabditis briggsae.